A 204-amino-acid polypeptide reads, in one-letter code: LexA repressor (204 aa).

The H-T-H motif DNA-binding region spans 31-51 (VREICAKVGLSSTSTVHGHLS). Catalysis depends on for autocatalytic cleavage activity residues Ser-128 and Lys-165.

Belongs to the peptidase S24 family. Homodimer.

It carries out the reaction Hydrolysis of Ala-|-Gly bond in repressor LexA.. Its function is as follows. Represses a number of genes involved in the response to DNA damage (SOS response), including recA and lexA. In the presence of single-stranded DNA, RecA interacts with LexA causing an autocatalytic cleavage which disrupts the DNA-binding part of LexA, leading to derepression of the SOS regulon and eventually DNA repair. The chain is LexA repressor from Clostridium acetobutylicum (strain ATCC 824 / DSM 792 / JCM 1419 / IAM 19013 / LMG 5710 / NBRC 13948 / NRRL B-527 / VKM B-1787 / 2291 / W).